We begin with the raw amino-acid sequence, 158 residues long: MGHFTFISLCLMPIFLSLSGAECYTCPIDWLSRNGLCYKLFDDTKTWPDAEIFCRKHKPGCHLTSIHSEAESADLAEYIYDYLKSEKNVWIGLNDPQKERIWEWTDRSSTNYTSWNEGEPNNSWNKEYCVHLLASQGYLKWNDTPCESLFAFICRCQF.

The first 23 residues, 1 to 23, serve as a signal peptide directing secretion; that stretch reads MGHFTFISLCLMPIFLSLSGAEC. 4 disulfide bridges follow: Cys-26–Cys-37, Cys-54–Cys-154, Cys-61–Cys-156, and Cys-129–Cys-146. The C-type lectin domain occupies 33 to 155; that stretch reads RNGLCYKLFD…CESLFAFICR (123 aa). Asn-111 and Asn-121 each carry an N-linked (GlcNAc...) asparagine glycan. Positions 119–121 match the Mannose-binding motif; the sequence is EPN. Residues Glu-127, Asn-142, and Asp-143 each contribute to the Ca(2+) site.

Belongs to the true venom lectin family. Homodimer; non-covalently linked. Expressed by the venom gland.

It is found in the secreted. In terms of biological role, mannose-binding lectin which recognizes specific carbohydrate structures and agglutinates a variety of animal cells by binding to cell-surface glycoproteins and glycolipids. May be a calcium-dependent lectin. The polypeptide is C-type lectin (Micrurus corallinus (Brazilian coral snake)).